The primary structure comprises 485 residues: Glutamyl-tRNA(Gln) amidotransferase subunit A (485 aa).

Residues lysine 76 and serine 151 each act as charge relay system in the active site. Residue serine 175 is the Acyl-ester intermediate of the active site.

Belongs to the amidase family. GatA subfamily. As to quaternary structure, heterotrimer of A, B and C subunits.

The enzyme catalyses L-glutamyl-tRNA(Gln) + L-glutamine + ATP + H2O = L-glutaminyl-tRNA(Gln) + L-glutamate + ADP + phosphate + H(+). Its function is as follows. Allows the formation of correctly charged Gln-tRNA(Gln) through the transamidation of misacylated Glu-tRNA(Gln) in organisms which lack glutaminyl-tRNA synthetase. The reaction takes place in the presence of glutamine and ATP through an activated gamma-phospho-Glu-tRNA(Gln). This chain is Glutamyl-tRNA(Gln) amidotransferase subunit A, found in Chlorobium luteolum (strain DSM 273 / BCRC 81028 / 2530) (Pelodictyon luteolum).